Consider the following 280-residue polypeptide: UDP-3-O-acyl-N-acetylglucosamine deacetylase (280 aa).

The Zn(2+) site is built by His79, His237, and Asp241. The active-site Proton donor is His264.

The protein belongs to the LpxC family. Requires Zn(2+) as cofactor.

The catalysed reaction is a UDP-3-O-[(3R)-3-hydroxyacyl]-N-acetyl-alpha-D-glucosamine + H2O = a UDP-3-O-[(3R)-3-hydroxyacyl]-alpha-D-glucosamine + acetate. The protein operates within glycolipid biosynthesis; lipid IV(A) biosynthesis; lipid IV(A) from (3R)-3-hydroxytetradecanoyl-[acyl-carrier-protein] and UDP-N-acetyl-alpha-D-glucosamine: step 2/6. In terms of biological role, catalyzes the hydrolysis of UDP-3-O-myristoyl-N-acetylglucosamine to form UDP-3-O-myristoylglucosamine and acetate, the committed step in lipid A biosynthesis. In Chlamydia felis (strain Fe/C-56) (Chlamydophila felis), this protein is UDP-3-O-acyl-N-acetylglucosamine deacetylase.